Here is a 334-residue protein sequence, read N- to C-terminus: Biotin synthase (334 aa).

A Radical SAM core domain is found at 48-275 (NQVQTSQLLS…RSMVRLSAGR (228 aa)). The [4Fe-4S] cluster site is built by Cys63, Cys67, and Cys70. 4 residues coordinate [2Fe-2S] cluster: Cys107, Cys138, Cys198, and Arg270.

It belongs to the radical SAM superfamily. Biotin synthase family. In terms of assembly, homodimer. The cofactor is [4Fe-4S] cluster. Requires [2Fe-2S] cluster as cofactor.

The enzyme catalyses (4R,5S)-dethiobiotin + (sulfur carrier)-SH + 2 reduced [2Fe-2S]-[ferredoxin] + 2 S-adenosyl-L-methionine = (sulfur carrier)-H + biotin + 2 5'-deoxyadenosine + 2 L-methionine + 2 oxidized [2Fe-2S]-[ferredoxin]. It functions in the pathway cofactor biosynthesis; biotin biosynthesis; biotin from 7,8-diaminononanoate: step 2/2. Catalyzes the conversion of dethiobiotin (DTB) to biotin by the insertion of a sulfur atom into dethiobiotin via a radical-based mechanism. The sequence is that of Biotin synthase from Maricaulis maris (strain MCS10) (Caulobacter maris).